The sequence spans 634 residues: Probable potassium transport system protein Kup (634 aa).

The next 12 helical transmembrane spans lie at 21-41, 61-81, 110-130, 148-168, 180-200, 217-237, 258-278, 296-316, 348-368, 377-397, 408-428, and 432-452; these read IILS…LYTL, ILSL…VAVI, IYIV…DGVI, PHMK…LFLC, FGPI…YNIA, FFLE…LAVT, WMYV…ALVL, GLYP…QALI, IYVP…VIGF, AYGV…IIYA, LWMM…ANII, and DGAW…RTWL.

Belongs to the HAK/KUP transporter (TC 2.A.72) family.

It localises to the cell inner membrane. The enzyme catalyses K(+)(in) + H(+)(in) = K(+)(out) + H(+)(out). In terms of biological role, transport of potassium into the cell. Likely operates as a K(+):H(+) symporter. This chain is Probable potassium transport system protein Kup, found in Xylella fastidiosa (strain 9a5c).